We begin with the raw amino-acid sequence, 233 residues long: Large ribosomal subunit protein uL1 (233 aa).

This sequence belongs to the universal ribosomal protein uL1 family. As to quaternary structure, part of the 50S ribosomal subunit.

In terms of biological role, binds directly to 23S rRNA. The L1 stalk is quite mobile in the ribosome, and is involved in E site tRNA release. Protein L1 is also a translational repressor protein, it controls the translation of the L11 operon by binding to its mRNA. The polypeptide is Large ribosomal subunit protein uL1 (Shewanella pealeana (strain ATCC 700345 / ANG-SQ1)).